A 261-amino-acid polypeptide reads, in one-letter code: Indole-3-glycerol phosphate synthase (261 aa).

It belongs to the TrpC family.

It carries out the reaction 1-(2-carboxyphenylamino)-1-deoxy-D-ribulose 5-phosphate + H(+) = (1S,2R)-1-C-(indol-3-yl)glycerol 3-phosphate + CO2 + H2O. The protein operates within amino-acid biosynthesis; L-tryptophan biosynthesis; L-tryptophan from chorismate: step 4/5. The chain is Indole-3-glycerol phosphate synthase from Burkholderia ambifaria (strain ATCC BAA-244 / DSM 16087 / CCUG 44356 / LMG 19182 / AMMD) (Burkholderia cepacia (strain AMMD)).